Consider the following 134-residue polypeptide: Profilin-2 (134 aa).

A disulfide bond links C13 and C118. The short motif at 84–100 (AVIRGKKGSGGITIKKT) is the Involved in PIP2 interaction element. Position 114 is a phosphothreonine (T114).

The protein belongs to the profilin family. In terms of assembly, occurs in many kinds of cells as a complex with monomeric actin in a 1:1 ratio. In terms of processing, phosphorylated by MAP kinases.

It localises to the cytoplasm. Its subcellular location is the cytoskeleton. Functionally, binds to actin and affects the structure of the cytoskeleton. At high concentrations, profilin prevents the polymerization of actin, whereas it enhances it at low concentrations. This is Profilin-2 from Olea europaea (Common olive).